A 347-amino-acid chain; its full sequence is Phenylalanine--tRNA ligase alpha subunit (347 aa).

Residue Glu265 coordinates Mg(2+).

The protein belongs to the class-II aminoacyl-tRNA synthetase family. Phe-tRNA synthetase alpha subunit type 1 subfamily. As to quaternary structure, tetramer of two alpha and two beta subunits. Mg(2+) serves as cofactor.

It localises to the cytoplasm. It carries out the reaction tRNA(Phe) + L-phenylalanine + ATP = L-phenylalanyl-tRNA(Phe) + AMP + diphosphate + H(+). This is Phenylalanine--tRNA ligase alpha subunit from Wolbachia sp. subsp. Brugia malayi (strain TRS).